We begin with the raw amino-acid sequence, 225 residues long: Small ribosomal subunit protein eS1 (225 aa).

A compositionally biased stretch (acidic residues) spans 206–216 (PVEEPAAEEVA). Residues 206–225 (PVEEPAAEEVAEAPAAETQE) form a disordered region.

The protein belongs to the eukaryotic ribosomal protein eS1 family.

The protein is Small ribosomal subunit protein eS1 of Methanococcus maripaludis (strain C5 / ATCC BAA-1333).